Consider the following 491-residue polypeptide: UDP-glycosyltransferase 73C1 (491 aa).

UDP-alpha-D-glucose contacts are provided by residues Ser-292, 352–354 (SPQ), 369–377 (HCGWNSTLE), and 391–394 (FGDQ).

The protein belongs to the UDP-glycosyltransferase family.

In terms of biological role, involved in the O-glucosylation of trans-zeatin and dihydrozeatin. Also active in vitro on cis-zeatin, dihydrozeatin-9-N-Glc, and olomoucine. Can detoxify the explosive 2,4,6-trinitrotoluene in plant by forming O- or C-glucose conjugates. In Arabidopsis thaliana (Mouse-ear cress), this protein is UDP-glycosyltransferase 73C1 (UGT73C1).